Here is a 254-residue protein sequence, read N- to C-terminus: 3-beta-hydroxysteroid dehydrogenase (254 aa).

NAD(+) is bound by residues 12–40 (VTGG…SDIN) and aspartate 61. Serine 139 provides a ligand contact to substrate. The active-site Proton acceptor is the tyrosine 152. Lysine 156 contacts NAD(+).

Belongs to the short-chain dehydrogenases/reductases (SDR) family. As to quaternary structure, homotetramer.

The enzyme catalyses testosterone + NAD(+) = androst-4-ene-3,17-dione + NADH + H(+). It carries out the reaction testosterone + NADP(+) = androst-4-ene-3,17-dione + NADPH + H(+). This is 3-beta-hydroxysteroid dehydrogenase from Comamonas testosteroni (Pseudomonas testosteroni).